The primary structure comprises 195 residues: ATP-dependent Clp protease proteolytic subunit 2 (195 aa).

Residue Ser92 is the Nucleophile of the active site. Residue His117 is part of the active site.

The protein belongs to the peptidase S14 family. In terms of assembly, fourteen ClpP subunits assemble into 2 heptameric rings which stack back to back to give a disk-like structure with a central cavity, resembling the structure of eukaryotic proteasomes.

The protein localises to the cytoplasm. It catalyses the reaction Hydrolysis of proteins to small peptides in the presence of ATP and magnesium. alpha-casein is the usual test substrate. In the absence of ATP, only oligopeptides shorter than five residues are hydrolyzed (such as succinyl-Leu-Tyr-|-NHMec, and Leu-Tyr-Leu-|-Tyr-Trp, in which cleavage of the -Tyr-|-Leu- and -Tyr-|-Trp bonds also occurs).. Cleaves peptides in various proteins in a process that requires ATP hydrolysis. Has a chymotrypsin-like activity. Plays a major role in the degradation of misfolded proteins. This is ATP-dependent Clp protease proteolytic subunit 2 from Rhodococcus jostii (strain RHA1).